We begin with the raw amino-acid sequence, 381 residues long: MPAVDPVRLTADLVRCASVTPADEGALDILHDVLSDAGFDCAWADRGGIRNLFARWGRKGHPKTFGFNGHTDVVPIGNADDWSMPPFGAEVKDGIMYGRGTTDMKSGVAAFAAAAVDFVRDTPPDGAIVLAITGDEEGDATDGTTALLAYMAAQGEQMSACLVGEPTCPDRMGEMIKIGRRGSMTAWITFIGKQGHAAYPHRACNPLPALMRLMDRLASHKLDEGTEFFDPSTLAIVTVDTGNPATNVIPASCSGTVNIRFNDAHSGASLTEWIKTELSRIEGEFGVQIDLRIKISGESFLTPPGPLSALVSKAVKAQTGIEPVLSTTGGTSDARFVKDHCPVVEFGLVGQSMHQVDEHVKTDHIVELKAIYSRILTDYFA.

His-70 provides a ligand contact to Zn(2+). The active site involves Asp-72. Asp-103 is a Zn(2+) binding site. Glu-136 acts as the Proton acceptor in catalysis. Glu-137, Glu-165, and His-354 together coordinate Zn(2+).

The protein belongs to the peptidase M20A family. DapE subfamily. In terms of assembly, homodimer. Zn(2+) is required as a cofactor. Co(2+) serves as cofactor.

It carries out the reaction N-succinyl-(2S,6S)-2,6-diaminopimelate + H2O = (2S,6S)-2,6-diaminopimelate + succinate. Its pathway is amino-acid biosynthesis; L-lysine biosynthesis via DAP pathway; LL-2,6-diaminopimelate from (S)-tetrahydrodipicolinate (succinylase route): step 3/3. Catalyzes the hydrolysis of N-succinyl-L,L-diaminopimelic acid (SDAP), forming succinate and LL-2,6-diaminopimelate (DAP), an intermediate involved in the bacterial biosynthesis of lysine and meso-diaminopimelic acid, an essential component of bacterial cell walls. In Roseobacter denitrificans (strain ATCC 33942 / OCh 114) (Erythrobacter sp. (strain OCh 114)), this protein is Succinyl-diaminopimelate desuccinylase.